The following is a 900-amino-acid chain: Alanine--tRNA ligase (900 aa).

Positions 604, 608, 708, and 712 each coordinate Zn(2+).

It belongs to the class-II aminoacyl-tRNA synthetase family. Requires Zn(2+) as cofactor.

Its subcellular location is the cytoplasm. The enzyme catalyses tRNA(Ala) + L-alanine + ATP = L-alanyl-tRNA(Ala) + AMP + diphosphate. In terms of biological role, catalyzes the attachment of alanine to tRNA(Ala) in a two-step reaction: alanine is first activated by ATP to form Ala-AMP and then transferred to the acceptor end of tRNA(Ala). Also edits incorrectly charged Ser-tRNA(Ala) and Gly-tRNA(Ala) via its editing domain. The polypeptide is Alanine--tRNA ligase (Saccharolobus islandicus (strain Y.G.57.14 / Yellowstone #1) (Sulfolobus islandicus)).